The chain runs to 248 residues: 21S rRNA pseudouridine(2819) synthase (248 aa).

The active site involves aspartate 58.

Belongs to the pseudouridine synthase RluA family.

The protein localises to the mitochondrion. It carries out the reaction uridine(2819) in 21S rRNA = pseudouridine(2819) in 21S rRNA. Pseudouridylate synthase responsible for the pseudouridine-2819 formation in mitochondrial 21S rRNA. May modulate the efficiency or the fidelity of the mitochondrial translation machinery. The sequence is that of 21S rRNA pseudouridine(2819) synthase (PUS5) from Candida albicans (strain SC5314 / ATCC MYA-2876) (Yeast).